The chain runs to 1209 residues: MESAPKTVSLPVSPLGYVYARQKASLQTGTVSLTAARSVDSDLAVLPVIRGLTVEQTFTTNVAVVAGSKTTGLGGTGITLKLTPSHFNPNAFVFYGGSVIGASSNAPNLTRACEAARRRFGFSAFSSPPVENAVETSGEEICASLNLSPETTALYLVVTESFKEMVYVCNTFLHYGGTSTVTIDGQDAMKIPIYPVQLYMPDVNRLASEPFNAKHRSIGDEFVYSRPFFNSDLCRLLHGYVLGPAAVALRVRNLDGVARGAAHLALDENHEGSVLPQDVTFTLFDSTQGNAGKGSGRAQRQGDGSGSKNSASSGIERRLASVMAADTALSVDSIMGAGIYDTELPSVEDWPVLSSGDDTESLEALGAYAARLSGLVGAMVFSANSVLYMTEVDDGGPADGKDGSNPSYHRFYLIAAPYVAGNPQTDKDGRVLPHTADQQAAPINGSNQEFSLDYLALACGFCPQILARLLFYLERCDAGTFGGRNETDALRYLANTLESDVPCGLCNQATRPACAHTTLHRLRQRLPRFGAPVRAPIGIFGTMNSAYSDCDVLGNYASYGALKRPNDNEAPKSIMQDTYRATMERLVNELEQAKLIDKETLAQASPCSAPTSVVHDQASFIGLLSNIKDTIEGAAEQFMRTLVEARDFKIREGLADANHTMSISLDPYSSSFCPVTSFLARRTVFAVLQDLVLSQCHCLFYGQSVEGRNFRNQFQPVLRRRFLDMLNGGFITAKTVTVTVSDSGVLAPDLTRPASEPPTKDYDGDMARVSMEVLRDLRVKNRVLFSNGGANMSEAARARVAGMASAYRRPDKGSNILNGAVGFLVKQYHGVLFPRGHPPGIDTPNPQWFWTLLQRNQMPARLLSKEDIETITAIKRFSDEYSAINFINLTPNNIGELAQFYFANLVLKYCDHSQYFINGLTAIVVGSRRPRDPAAVLAWIDRTINGAADVEPAAQEVLQRLGSNPAAWTGTFTSTNMVRYVMDQRPMVVIGLSISKYNGSAGNNRVFQAGNWNGLNGGKNVCPLMAFDRTRRFVLACPRVGFTCEAGGFGTGVRENTLSEQVRGIVSEGGPMVQTAVFAAVLHALGARTQHLAVDDWIGLVDDEFLAASLDALNATVVDQFGEWSVEAAQELVKNMEAQTTAGAVAAGEGAFDFGACVGDTPQQSTSAFNGGLAMAAAPAGQKRSLPDDILFDMGAPPEKKSGLTFDML.

Residues 290-312 (NAGKGSGRAQRQGDGSGSKNSAS) are disordered. A zinc finger lies at 503–516 (CGLCNQATRPACAH). Positions 849–850 (FW) match the Required for filament formation motif. The interval 1182-1209 (QKRSLPDDILFDMGAPPEKKSGLTFDML) is required for nuclear localization.

It belongs to the herpesviridae major DNA-binding protein family. Homooligomers. Forms double-helical filaments necessary for the formation of replication compartments within the host nucleus. Interacts with the origin-binding protein. Interacts with the helicase primase complex; this interaction stimulates primer synthesis activity of the helicase-primase complex. Interacts with the DNA polymerase. Interacts with the alkaline exonuclease; this interaction increases its nuclease processivity.

It is found in the host nucleus. Plays several crucial roles in viral infection. Participates in the opening of the viral DNA origin to initiate replication by interacting with the origin-binding protein. May disrupt loops, hairpins and other secondary structures present on ssDNA to reduce and eliminate pausing of viral DNA polymerase at specific sites during elongation. Promotes viral DNA recombination by performing strand-transfer, characterized by the ability to transfer a DNA strand from a linear duplex to a complementary single-stranded DNA circle. Can also catalyze the renaturation of complementary single strands. Additionally, reorganizes the host cell nucleus, leading to the formation of prereplicative sites and replication compartments. This process is driven by the protein which can form double-helical filaments in the absence of DNA. This Equine herpesvirus 1 (strain Ab4p) (EHV-1) protein is Major DNA-binding protein.